A 161-amino-acid polypeptide reads, in one-letter code: Nucleotide-binding protein SAR11_0692 (161 aa).

This sequence belongs to the YajQ family.

Nucleotide-binding protein. The protein is Nucleotide-binding protein SAR11_0692 of Pelagibacter ubique (strain HTCC1062).